We begin with the raw amino-acid sequence, 338 residues long: Phenylalanine--tRNA ligase alpha subunit (338 aa).

Position 252 (Glu-252) interacts with Mg(2+).

Belongs to the class-II aminoacyl-tRNA synthetase family. Phe-tRNA synthetase alpha subunit type 1 subfamily. Tetramer of two alpha and two beta subunits. Requires Mg(2+) as cofactor.

The protein localises to the cytoplasm. It catalyses the reaction tRNA(Phe) + L-phenylalanine + ATP = L-phenylalanyl-tRNA(Phe) + AMP + diphosphate + H(+). This is Phenylalanine--tRNA ligase alpha subunit from Mycoplasmoides gallisepticum (strain R(low / passage 15 / clone 2)) (Mycoplasma gallisepticum).